The sequence spans 504 residues: Kinesin light chain 3 (504 aa).

A coiled-coil region spans residues 90–150 (ALSAHVGALE…EEEKRHLEFL (61 aa)). A disordered region spans residues 153–197 (LRQYDPPAESQQSESPPRRDSLASLFPSEEEERKGPEAAGAAAAQ). Residues 158–167 (PPAESQQSES) are compositionally biased toward low complexity. A Phosphoserine modification is found at S173. TPR repeat units follow at residues 207–240 (LRTLHNLVIQYAGQGRYEVAVPLCRQALEDLERS), 249–282 (ATMLNILALVYRDQNKYKEATDLLHDALQIREQT), 291–324 (AATLNNLAVLYGKRGRYREAEPLCQRALEIREKV), 333–366 (AKQLNNLALLCQNQGKFEDVERHYARALSIYEAL), and 375–408 (AKTKNNLASAYLKQNKYQQAEELYKEILHKEDLP). Positions 411-438 (LGAPNTGTAGDAEQALRRSSSLSKIRES) are disordered. Residue S466 is modified to Phosphoserine. T498 is subject to Phosphothreonine. Position 502 is a phosphoserine (S502).

The protein belongs to the kinesin light chain family. Oligomer composed of two heavy chains and two light chains. Associates with microtubulin in an ATP-dependent manner. Interacts with KIF5C. Interacts with ODF1. Interacts with LRGUK. Interacts with VDAC2.

Its subcellular location is the cytoplasm. The protein resides in the cytoskeleton. It is found in the mitochondrion. Kinesin is a microtubule-associated force-producing protein that may play a role in organelle transport. Plays a role during spermiogenesis in the development of the sperm tail midpiece and in the normal function of spermatozoa. May play a role in the formation of the mitochondrial sheath formation in the developing spermatid midpiece. This Pongo abelii (Sumatran orangutan) protein is Kinesin light chain 3 (KLC3).